An 825-amino-acid chain; its full sequence is Interleukin-4 receptor subunit alpha (825 aa).

The N-terminal stretch at 1-25 (MGWLCSGLLFPVSCLVLLQVASSGN) is a signal peptide. Residues 26–232 (MKVLQEPTCV…NSYREPFEQH (207 aa)) lie on the Extracellular side of the membrane. An intrachain disulfide couples Cys-34 to Cys-44. The N-linked (GlcNAc...) asparagine glycan is linked to Asn-53. The cysteines at positions 74 and 86 are disulfide-linked. N-linked (GlcNAc...) asparagine glycans are attached at residues Asn-98, Asn-128, Asn-134, Asn-176, and Asn-209. The region spanning 125–224 (APGNLTVHTN…WSPSTKWHNS (100 aa)) is the Fibronectin type-III domain. A WSXWS motif motif is present at residues 212-216 (WSEWS). The helical transmembrane segment at 233-256 (LLLGVSVSCIVILAVCLLCYVSIT) threads the bilayer. Residues 257–825 (KIKKEWWDQI…SVGPTYMRVS (569 aa)) are Cytoplasmic-facing. The short motif at 262 to 270 (WWDQIPNPA) is the Box 1 motif element. Disordered regions lie at residues 373-397 (EEEE…DFQE) and 433-485 (LPPS…LTCT). The interval 437-557 (GSTSAHMPWD…ETWEQILRRN (121 aa)) is required for IRS1 activation and IL4-induced cell growth. Residues 475-485 (PTQSPDNLTCT) are compositionally biased toward polar residues. Phosphotyrosine occurs at positions 497, 575, 603, and 631. The segment at 558–657 (VLQHGAAAAP…VPVPLFTFGL (100 aa)) is required for IL4-induced gene expression. Positions 651 to 703 (PLFTFGLDREPPRSPQSSHLPSSSPEHLGLEPGEKVEDMPKPPLPQEQATDPL) are disordered. Over residues 665-677 (PQSSHLPSSSPEH) the composition is skewed to low complexity. Residues 678–690 (LGLEPGEKVEDMP) are compositionally biased toward basic and acidic residues. The short motif at 711–716 (IVYSAL) is the ITIM motif element. Residues 782 to 809 (PSGISEKSKSSSSFHPAPGNAQSSSQTP) are disordered.

The protein belongs to the type I cytokine receptor family. Type 4 subfamily. In terms of assembly, the functional IL4 receptor is formed by initial binding of IL4 to IL4R. Subsequent recruitment to the complex of the common gamma chain, in immune cells, creates a type I receptor and, in non-immune cells, of IL13RA1 forms a type II receptor. IL4R can also interact with the IL13/IL13RA1 complex to form a similar type II receptor. Interacts with PIK3C3. Interacts with the SH2-containing phosphatases, PTPN6/SHIP1, PTPN11/SHIP2 and INPP5D/SHIP. Interacts with JAK1 through a Box 1-containing region; inhibited by SOCS5. Interacts with SOCS5; inhibits IL4 signaling. Interacts with JAK3. Interacts with CLM1. Interacts with IL13RA2. In terms of processing, on IL4 binding, phosphorylated on C-terminal tyrosine residues. Phosphorylation on any one of tyrosine residues, Tyr-575, Tyr-603 or Tyr-631, is required for STAT6-induced gene induction. Post-translationally, the soluble form (sIL4R/IL4BP) can also be produced by proteolytic cleavage at the cell surface (shedding) by a metalloproteinase. Isoform 1 and isoform 2 are highly expressed in activated T-cells.

The protein resides in the cell membrane. It is found in the secreted. In terms of biological role, receptor for both interleukin 4 and interleukin 13. Couples to the JAK1/2/3-STAT6 pathway. The IL4 response is involved in promoting Th2 differentiation. The IL4/IL13 responses are involved in regulating IgE production and, chemokine and mucus production at sites of allergic inflammation. In certain cell types, can signal through activation of insulin receptor substrates, IRS1/IRS2. Its function is as follows. Soluble IL4R (sIL4R) inhibits IL4-mediated cell proliferation and IL5 up-regulation by T-cells. The sequence is that of Interleukin-4 receptor subunit alpha (IL4R) from Homo sapiens (Human).